The primary structure comprises 218 residues: Fucoxanthin-chlorophyll a-c binding protein, chloroplastic (218 aa).

Residues 1-36 (MFYSAAVAALMVGSASAFLAPAQFNSVAKSSGALSM) constitute a chloroplast transit peptide.

It belongs to the fucoxanthin chlorophyll protein family. The LHC complex of chromophytic algae is composed of fucoxanthin, chlorophyll A and C bound non-covalently by fucoxanthin chlorophyll proteins (FCPs). The ratio of pigments in this LHC is; fucoxanthin: chlorophyll C: chlorophyll A; (0.6-1): (0.1-0.3): (1).

Its subcellular location is the plastid. The protein resides in the chloroplast thylakoid membrane. Functionally, the light-harvesting complex (LHC) functions as a light receptor, it captures and delivers excitation energy to photosystems with which it is closely associated. Energy is transferred from the carotenoid and chlorophyll C (or B) to chlorophyll A and the photosynthetic reaction centers where it is used to synthesize ATP and reducing power. The sequence is that of Fucoxanthin-chlorophyll a-c binding protein, chloroplastic from Chattonella marina var. antiqua (Red tide flagellate).